A 446-amino-acid polypeptide reads, in one-letter code: ATP-dependent protease ATPase subunit HslU (446 aa).

Residues V18, 60–65, D259, E324, and R396 contribute to the ATP site; that span reads GVGKTE.

Belongs to the ClpX chaperone family. HslU subfamily. In terms of assembly, a double ring-shaped homohexamer of HslV is capped on each side by a ring-shaped HslU homohexamer. The assembly of the HslU/HslV complex is dependent on binding of ATP.

Its subcellular location is the cytoplasm. In terms of biological role, ATPase subunit of a proteasome-like degradation complex; this subunit has chaperone activity. The binding of ATP and its subsequent hydrolysis by HslU are essential for unfolding of protein substrates subsequently hydrolyzed by HslV. HslU recognizes the N-terminal part of its protein substrates and unfolds these before they are guided to HslV for hydrolysis. This Dechloromonas aromatica (strain RCB) protein is ATP-dependent protease ATPase subunit HslU.